Consider the following 237-residue polypeptide: NAD-dependent protein deacetylase (237 aa).

Residues 1-237 enclose the Deacetylase sirtuin-type domain; the sequence is MQDITQAEAI…TIFAELTIKE (237 aa). NAD(+) is bound by residues Ala-25, Thr-29, Arg-37, Gln-100, Ile-102, Asp-103, and His-118. Residues Ile-102 and Asp-103 each contribute to the nicotinamide site. The active-site Proton acceptor is His-118. Residues Cys-126, Cys-129, His-144, and Cys-147 each contribute to the Zn(2+) site. NAD(+) is bound by residues Thr-185, Ser-186, and Asn-209.

It belongs to the sirtuin family. Class U subfamily.

It localises to the cytoplasm. It carries out the reaction N(6)-acetyl-L-lysyl-[protein] + NAD(+) + H2O = 2''-O-acetyl-ADP-D-ribose + nicotinamide + L-lysyl-[protein]. NAD-dependent protein deacetylase which modulates the activities of several enzymes which are inactive in their acetylated form. The polypeptide is NAD-dependent protein deacetylase (Enterococcus faecalis (strain ATCC 700802 / V583)).